Reading from the N-terminus, the 252-residue chain is Triosephosphate isomerase (252 aa).

10 to 12 contributes to the substrate binding site; the sequence is NWK. H96 (electrophile) is an active-site residue. The Proton acceptor role is filled by E168. Substrate contacts are provided by residues G174, S214, and 235-236; that span reads GG.

Belongs to the triosephosphate isomerase family. In terms of assembly, homodimer.

It is found in the cytoplasm. It carries out the reaction D-glyceraldehyde 3-phosphate = dihydroxyacetone phosphate. Its pathway is carbohydrate biosynthesis; gluconeogenesis. The protein operates within carbohydrate degradation; glycolysis; D-glyceraldehyde 3-phosphate from glycerone phosphate: step 1/1. Involved in the gluconeogenesis. Catalyzes stereospecifically the conversion of dihydroxyacetone phosphate (DHAP) to D-glyceraldehyde-3-phosphate (G3P). In Lactobacillus acidophilus (strain ATCC 700396 / NCK56 / N2 / NCFM), this protein is Triosephosphate isomerase.